The sequence spans 490 residues: Aspartyl/glutamyl-tRNA(Asn/Gln) amidotransferase subunit B (490 aa).

It belongs to the GatB/GatE family. GatB subfamily. As to quaternary structure, heterotrimer of A, B and C subunits.

It carries out the reaction L-glutamyl-tRNA(Gln) + L-glutamine + ATP + H2O = L-glutaminyl-tRNA(Gln) + L-glutamate + ADP + phosphate + H(+). The catalysed reaction is L-aspartyl-tRNA(Asn) + L-glutamine + ATP + H2O = L-asparaginyl-tRNA(Asn) + L-glutamate + ADP + phosphate + 2 H(+). Its function is as follows. Allows the formation of correctly charged Asn-tRNA(Asn) or Gln-tRNA(Gln) through the transamidation of misacylated Asp-tRNA(Asn) or Glu-tRNA(Gln) in organisms which lack either or both of asparaginyl-tRNA or glutaminyl-tRNA synthetases. The reaction takes place in the presence of glutamine and ATP through an activated phospho-Asp-tRNA(Asn) or phospho-Glu-tRNA(Gln). The sequence is that of Aspartyl/glutamyl-tRNA(Asn/Gln) amidotransferase subunit B from Zymomonas mobilis subsp. mobilis (strain ATCC 31821 / ZM4 / CP4).